The following is a 699-amino-acid chain: MTQKLVRLVIVSLAITVTLLQAKTDNQEVSALNVMFTSLNSPSKLKGWKANGGDPCEDSWEGVKCKGSSVTELQLSGFELGGSRGYLLSNLKSLTTFDLSKNNLKGNIPYQLPPNIANLDFSENELDGNVPYSLSQMKNLQSINLGQNKLNGELPDMFQKLSKLETLDFSLNKLSGKLPQSFANLTSLKKLHLQDNRFTGDINVLRNLAIDDLNVEDNQFEGWIPNELKDIDSLLTGGNDWSTETAPPPPPGVKYGRKSSGSKDGGGITAGTGMVIAGACLGVLVLIIVLIALVSKKKSSLSPHFIDEDNSHHTPKFKSLTSHGSAQELRVDFGNDYKDGKSGDSGDENIHRIGSKGLKHYVSSRVMSFTDTEFANKLNAKRTTSTRSAVEFELSDLQSATANFSPGNLLGEGSIGRVYRAKYSDGRTLAVKKIDSTLFDSGKSEGITPIVMSLSKIRHQNIAELVGYCSEQGHNMLVYEYFRNGSLHEFLHLSDCFSKPLTWNTRVRIALGTARAVEYLHEACSPSVMHKNIKSSNILLDADLNPRLSDYGLSKFYLRTSQNLGEGYNAPEARDPSAYTPKSDVYSFGVVMLELLTGRVPFDGEKPRPERSLVRWATPQLHDIDALSNIADPALHGLYPPKSLSRFADIIALCVQVEPEFRPPMSEVVEALVRMVQRSSMKLKDDLSSSYRAHDDYDY.

Residues methionine 1 to alanine 22 form the signal peptide. Over lysine 23 to glycine 273 the chain is Extracellular. 5 LRR repeats span residues serine 93–asparagine 115, isoleucine 116–glutamine 136, asparagine 139–leucine 161, lysine 163–threonine 186, and serine 187–alanine 209. Residue asparagine 184 is glycosylated (N-linked (GlcNAc...) asparagine). The tract at residues asparagine 239–lysine 263 is disordered. A helical membrane pass occupies residues methionine 274–valine 294. Topologically, residues serine 295 to tyrosine 699 are cytoplasmic. A Phosphoserine modification is found at serine 368. Positions phenylalanine 404–methionine 675 constitute a Protein kinase domain. Residues leucine 410–valine 418 and lysine 432 each bind ATP.

The protein belongs to the protein kinase superfamily. Ser/Thr protein kinase family. In terms of tissue distribution, expressed in leaves and flowers.

Its subcellular location is the membrane. The sequence is that of Protein STRUBBELIG-RECEPTOR FAMILY 5 (SRF5) from Arabidopsis thaliana (Mouse-ear cress).